A 749-amino-acid chain; its full sequence is Protein Niban 2 (749 aa).

Gly2 carries the N-myristoyl glycine lipid modification. The PH domain maps to 68–192 (RIIFSGNLFQ…WQAVLQDCVR (125 aa)). Ser568, Ser574, Ser607, Ser628, Ser647, Ser650, Ser669, Ser674, Ser685, Ser695, and Ser699 each carry phosphoserine. A disordered region spans residues 589–749 (WGEQYGDSGD…EDSAGVQTEF (161 aa)). Positions 710–719 (VDLEPPKPSD) are enriched in basic and acidic residues. The segment covering 723-749 (GEQVSSPGSRPPIHTTTEDSAGVQTEF) has biased composition (polar residues).

It belongs to the Niban family. Post-translationally, as apoptosis proceeds, degraded via an proteasome-independent pathway, probably by caspases.

It localises to the cytoplasm. It is found in the cytosol. The protein localises to the cell junction. The protein resides in the adherens junction. Its subcellular location is the membrane. May play a role in apoptosis suppression. This Mus musculus (Mouse) protein is Protein Niban 2.